A 775-amino-acid chain; its full sequence is Armadillo-like helical domain-containing protein 4 (775 aa).

An N-terminal signal peptide occupies residues 1-47; it reads MLQDSITGIVNSFNLFFPSTMSRPTLMPTCVAFCSILFLTLATGCQA. Residues 48–715 are Extracellular-facing; that stretch reads FPKVERRETA…KDKAGYMSGM (668 aa). Asparagine 76 carries an N-linked (GlcNAc...) asparagine glycan. Disordered regions lie at residues 120–148, 247–273, and 324–366; these read AGLL…PGPS, VPGV…DGQS, and KFES…PSST. The segment covering 129–142 has biased composition (polar residues); it reads GVYSSSEPVVSASE. A compositionally biased stretch (basic and acidic residues) spans 324-335; sequence KFESISRGRPPE. Residue asparagine 476 is glycosylated (N-linked (GlcNAc...) asparagine). Residues 559-669 form a disordered region; it reads IPVLGSPMAP…PGITSQEPDI (111 aa). Residues 577-599 show a composition bias toward polar residues; that stretch reads TISSALPSEGRTSPSISRPNTAA. Residues 606–640 are compositionally biased toward acidic residues; that stretch reads LESEEVEDDEDEEDEEDEEEEEEDEEDEEDEEDKE. Residues 716–736 traverse the membrane as a helical segment; it reads LVPVGVGIAGALFILGALYSI. Residues 737–775 lie on the Cytoplasmic side of the membrane; that stretch reads KVMNRRRRNGFKRHKRKQREFNSMQDRVMLLADSSEDEF. Phosphoserine occurs at positions 770 and 771.

Interacts with IL6ST; this interaction prevents IL6ST protein homodimerization and bridges ARMH4 with IL6R and STAT3 and therefore inhibits phosphorylation of STAT3 at 'Tyr-705'. Interacts (via cytoplasmic tail) with RICTOR; this interaction bridges ARMH4 to the mTORC2 complex and inhibits the mTORC2 kinase activity. As to expression, expressed in bone-marroew cells.

The protein localises to the membrane. May modulate immune response and may play a role in inflammation. Down-modulates STAT3 signaling throught direct interaction with IL6ST, resulting in the inhibition of phosphorylation of STAT3 at 'Tyr-705'. May negatively regulates AKT signaling by modulating the activity of mTORC2 complex through RICTOR interaction. The polypeptide is Armadillo-like helical domain-containing protein 4 (Mus musculus (Mouse)).